The sequence spans 591 residues: Aspartate--tRNA(Asp/Asn) ligase (591 aa).

E175 provides a ligand contact to L-aspartate. Positions 199-202 are aspartate; the sequence is QQFK. Residues R221 and H453 each contribute to the L-aspartate site. 221–223 is a binding site for ATP; that stretch reads RDE. An ATP-binding site is contributed by E486. R493 is an L-aspartate binding site. 538-541 contributes to the ATP binding site; the sequence is GIDR.

Belongs to the class-II aminoacyl-tRNA synthetase family. Type 1 subfamily. In terms of assembly, homodimer.

Its subcellular location is the cytoplasm. It catalyses the reaction tRNA(Asx) + L-aspartate + ATP = L-aspartyl-tRNA(Asx) + AMP + diphosphate. Aspartyl-tRNA synthetase with relaxed tRNA specificity since it is able to aspartylate not only its cognate tRNA(Asp) but also tRNA(Asn). Reaction proceeds in two steps: L-aspartate is first activated by ATP to form Asp-AMP and then transferred to the acceptor end of tRNA(Asp/Asn). This Paracoccus denitrificans (strain Pd 1222) protein is Aspartate--tRNA(Asp/Asn) ligase.